A 427-amino-acid chain; its full sequence is Dihydroorotase (427 aa).

Zn(2+) contacts are provided by H58 and H60. Substrate contacts are provided by residues 60 to 62 (HYR) and N92. The Zn(2+) site is built by D150, H177, and H230. N276 is a binding site for substrate. Residue D303 coordinates Zn(2+). D303 is a catalytic residue. Substrate contacts are provided by residues H307 and 321–322 (FG).

This sequence belongs to the metallo-dependent hydrolases superfamily. DHOase family. Class I DHOase subfamily. Zn(2+) serves as cofactor.

The enzyme catalyses (S)-dihydroorotate + H2O = N-carbamoyl-L-aspartate + H(+). The protein operates within pyrimidine metabolism; UMP biosynthesis via de novo pathway; (S)-dihydroorotate from bicarbonate: step 3/3. Its function is as follows. Catalyzes the reversible cyclization of carbamoyl aspartate to dihydroorotate. This chain is Dihydroorotase, found in Lactobacillus leichmannii.